The primary structure comprises 130 residues: Lysozyme C (130 aa).

A C-type lysozyme domain is found at 2 to 130 (KVYGRCELAA…VNVWIRGCRL (129 aa)). 4 disulfides stabilise this stretch: cysteine 7–cysteine 128, cysteine 31–cysteine 116, cysteine 65–cysteine 81, and cysteine 77–cysteine 95. Residues glutamate 36 and aspartate 53 contribute to the active site.

It belongs to the glycosyl hydrolase 22 family. As to quaternary structure, monomer.

The protein localises to the secreted. It carries out the reaction Hydrolysis of (1-&gt;4)-beta-linkages between N-acetylmuramic acid and N-acetyl-D-glucosamine residues in a peptidoglycan and between N-acetyl-D-glucosamine residues in chitodextrins.. In terms of biological role, lysozymes have primarily a bacteriolytic function; those in tissues and body fluids are associated with the monocyte-macrophage system and enhance the activity of immunoagents. The chain is Lysozyme C (LYZ) from Phasianus versicolor (Green pheasant).